A 439-amino-acid chain; its full sequence is Methylenetetrahydrofolate--tRNA-(uracil-5-)-methyltransferase TrmFO (439 aa).

Position 9 to 14 (9 to 14) interacts with FAD; it reads GAGLAG.

Belongs to the MnmG family. TrmFO subfamily. FAD is required as a cofactor.

The protein localises to the cytoplasm. The catalysed reaction is uridine(54) in tRNA + (6R)-5,10-methylene-5,6,7,8-tetrahydrofolate + NADH + H(+) = 5-methyluridine(54) in tRNA + (6S)-5,6,7,8-tetrahydrofolate + NAD(+). It catalyses the reaction uridine(54) in tRNA + (6R)-5,10-methylene-5,6,7,8-tetrahydrofolate + NADPH + H(+) = 5-methyluridine(54) in tRNA + (6S)-5,6,7,8-tetrahydrofolate + NADP(+). Catalyzes the folate-dependent formation of 5-methyl-uridine at position 54 (M-5-U54) in all tRNAs. This Desulforudis audaxviator (strain MP104C) protein is Methylenetetrahydrofolate--tRNA-(uracil-5-)-methyltransferase TrmFO.